The sequence spans 155 residues: Small ribosomal subunit protein uS7 (155 aa).

It belongs to the universal ribosomal protein uS7 family. In terms of assembly, part of the 30S ribosomal subunit. Contacts proteins S9 and S11.

One of the primary rRNA binding proteins, it binds directly to 16S rRNA where it nucleates assembly of the head domain of the 30S subunit. Is located at the subunit interface close to the decoding center, probably blocks exit of the E-site tRNA. This is Small ribosomal subunit protein uS7 from Halorhodospira halophila (strain DSM 244 / SL1) (Ectothiorhodospira halophila (strain DSM 244 / SL1)).